Consider the following 363-residue polypeptide: Spore germination protein YndE (363 aa).

10 helical membrane-spanning segments follow: residues 8-28 (ITTA…GVLT), 41-61 (DGWI…MIIA), 84-104 (LGHL…AFEV), 113-133 (FFLL…WIGL), 149-169 (MIFP…LGIF), 189-209 (VKTT…VAFM), 218-238 (AVVI…IMVI), 273-293 (FLLV…FYAA), 305-325 (PLSC…MPKN), and 335-355 (TVSH…LVIS).

The protein belongs to the amino acid-polyamine-organocation (APC) superfamily. Spore germination protein (SGP) (TC 2.A.3.9) family.

Its subcellular location is the cell membrane. Its function is as follows. Involved in the germinative response to L-alanine. Could be an amino acid transporter. This chain is Spore germination protein YndE (yndE), found in Bacillus subtilis (strain 168).